The primary structure comprises 580 residues: Glutamine--tRNA ligase (580 aa).

The 'HIGH' region signature appears at Pro-51 to His-61. Residues Glu-52–Asn-54 and His-58–Ser-64 each bind ATP. L-glutamine-binding residues include Asp-84 and Tyr-233. ATP is bound by residues Thr-252 and Arg-287–Leu-288. The 'KMSKS' region motif lies at Ile-294–Arg-298.

This sequence belongs to the class-I aminoacyl-tRNA synthetase family. As to quaternary structure, monomer.

It is found in the cytoplasm. The enzyme catalyses tRNA(Gln) + L-glutamine + ATP = L-glutaminyl-tRNA(Gln) + AMP + diphosphate. This is Glutamine--tRNA ligase from Ralstonia nicotianae (strain ATCC BAA-1114 / GMI1000) (Ralstonia solanacearum).